We begin with the raw amino-acid sequence, 281 residues long: Nucleoid occlusion protein (281 aa).

A disordered region spans residues 1 to 24 (MKHPFSRLFSFGEKEQEEMEEKQE). The segment at residues 145–164 (EALAQRLGKGQSTIANKLRL) is a DNA-binding region (H-T-H motif).

The protein belongs to the ParB family.

It localises to the cytoplasm. It is found in the nucleoid. Its function is as follows. Effects nucleoid occlusion by binding relatively nonspecifically to DNA and preventing the assembly of the division machinery in the vicinity of the nucleoid, especially under conditions that disturb the cell cycle. It helps to coordinate cell division and chromosome segregation by preventing the formation of the Z ring through the nucleoid, which would cause chromosome breakage. The protein is Nucleoid occlusion protein of Geobacillus kaustophilus (strain HTA426).